The following is a 359-amino-acid chain: NADPH HC-toxin reductase 2 (359 aa).

NADP(+) contacts are provided by residues arginine 39, 67–68 (DL), 87–89 (VAT), tyrosine 177, lysine 181, 206–209 (LGLV), and threonine 221. Lysine 181 (proton donor) is an active-site residue.

Belongs to the NAD(P)-dependent epimerase/dehydratase family.

In terms of biological role, in tandem with Hm1, NADPH-dependent HC toxin reductase (HCTR), which inactivates HC toxin, a cyclic tetrapeptide produced by the fungus Cochliobolus carbonum to permit infection and acting as an inhibitor of host histone deacetylases (HDACs), thus conferring resistance against C.carbonum race 1 in resistant cultivars (e.g. cv. B73 and cv. Wisconsin 22). Catalyzes the production of 8-hydroxy derivative of HC-toxin via the reduction of the 8-keto group of 2-amino-9,10-epoxy-8-oxo-decanoic acid, an amino acid of the HC-toxin. The protein is NADPH HC-toxin reductase 2 of Zea mays (Maize).